The following is a 211-amino-acid chain: Uracil phosphoribosyltransferase (211 aa).

5-phospho-alpha-D-ribose 1-diphosphate-binding positions include arginine 78, arginine 103, and 130-138 (DPMLATGGS). Residues isoleucine 193 and 198–200 (GDA) each bind uracil. Residue aspartate 199 participates in 5-phospho-alpha-D-ribose 1-diphosphate binding.

The protein belongs to the UPRTase family. It depends on Mg(2+) as a cofactor.

It carries out the reaction UMP + diphosphate = 5-phospho-alpha-D-ribose 1-diphosphate + uracil. The protein operates within pyrimidine metabolism; UMP biosynthesis via salvage pathway; UMP from uracil: step 1/1. With respect to regulation, allosterically activated by GTP. Functionally, catalyzes the conversion of uracil and 5-phospho-alpha-D-ribose 1-diphosphate (PRPP) to UMP and diphosphate. This is Uracil phosphoribosyltransferase from Hahella chejuensis (strain KCTC 2396).